Consider the following 510-residue polypeptide: D-alanine--D-alanyl carrier protein ligase (510 aa).

Position 157–158 (157–158) interacts with ATP; sequence TS. Aspartate 202 serves as a coordination point for D-alanine. 297 to 302 is an ATP binding site; that stretch reads NTYGPT. Residue valine 306 coordinates D-alanine. Residues aspartate 389 and lysine 498 each coordinate ATP. Position 498 (lysine 498) interacts with D-alanine.

This sequence belongs to the ATP-dependent AMP-binding enzyme family. DltA subfamily.

Its subcellular location is the cytoplasm. It catalyses the reaction holo-[D-alanyl-carrier protein] + D-alanine + ATP = D-alanyl-[D-alanyl-carrier protein] + AMP + diphosphate. It participates in cell wall biogenesis; lipoteichoic acid biosynthesis. Catalyzes the first step in the D-alanylation of lipoteichoic acid (LTA), the activation of D-alanine and its transfer onto the D-alanyl carrier protein (Dcp) DltC. In an ATP-dependent two-step reaction, forms a high energy D-alanyl-AMP intermediate, followed by transfer of the D-alanyl residue as a thiol ester to the phosphopantheinyl prosthetic group of the Dcp. D-alanylation of LTA plays an important role in modulating the properties of the cell wall in Gram-positive bacteria, influencing the net charge of the cell wall. The sequence is that of D-alanine--D-alanyl carrier protein ligase from Listeria monocytogenes serotype 4b (strain CLIP80459).